We begin with the raw amino-acid sequence, 483 residues long: PRAME family member 12 (483 aa).

The LRR 1; degenerate repeat unit spans residues 97–122 (RWKLQVLDLRNVDENFWGIWSGASAL). Residues 177 to 201 (HVCCKELQIFGIAIHRIIEVLNTVE) form an LRR 2; degenerate repeat. An LRR 3; degenerate repeat occupies 202–228 (LDCIQEVEVCCPWELSILIRFAPYLGQ). The stretch at 229–264 (MRNLRKLVLFNIHVSACIPLDRKEQFVIQFTSQFLK) is one LRR 4; degenerate repeat. LRR repeat units lie at residues 265–290 (LDYF…LRCL), 291–322 (QAPL…RQLK), 323–341 (ELDL…PLSV), 347–374 (EATL…ALSR), and 375–399 (CSQL…LLRH).

The protein belongs to the PRAME family.

The chain is PRAME family member 12 from Homo sapiens (Human).